The following is a 415-amino-acid chain: von Willebrand factor A domain-containing protein 1 (415 aa).

Residues 1–18 (MLFWTVLSMALSLRLALA) form the signal peptide. Residues 34–213 (DLLFLLDSSA…ELRGAIIDAM (180 aa)) enclose the VWFA domain. A phosphoserine mark is found at serine 74, serine 80, and serine 93. Fibronectin type-III domains follow at residues 214 to 305 (QPHQ…LQEE) and 307 to 405 (GPER…VPQA). A glycan (N-linked (GlcNAc...) asparagine) is linked at asparagine 264. Cysteines 369 and 393 form a disulfide.

In terms of assembly, homodimer or homomultimer; disulfide-linked. Interacts with HSPG2. Post-translationally, N-glycosylated.

It localises to the secreted. The protein resides in the extracellular space. The protein localises to the extracellular matrix. It is found in the basement membrane. Functionally, promotes matrix assembly. Involved in the organization of skeletal muscles and in the formation of neuromuscular junctions. This Rattus norvegicus (Rat) protein is von Willebrand factor A domain-containing protein 1 (Vwa1).